We begin with the raw amino-acid sequence, 23 residues long: M-poneritoxin-Nc1a (23 aa).

It belongs to the non-disulfide-bridged peptide (NDBP) superfamily. Medium-length antimicrobial peptide (group 3) family. Ponericin-W subfamily. As to expression, expressed by the venom gland.

It is found in the secreted. It localises to the target cell membrane. In terms of biological role, membrane-perturbating peptide with multiple activities. It is insecticidal, since it induces contractile paralysis in insects (L.cuprina) during several hours, and death after 24 hours. It shows antibacterial activity with higher activity against Gram-positive than Gram-negative bacteria. It is also antiparasitic, since it potently inhibits the larval development of the major pathogenic nematode of ruminants (H.contortus, IC(50)=5.1 uM), but fails to reduce the motility of adult males of the other nematode B.malayi. It also shows cytotoxic activity against HEK293 cells (EC(50)=12-14 uM) and induces hemolysis in human erythrocytes (EC(50)=28.6-48.2 uM). In addition, it causes an important increase in intracellular calcium concentration on neuronal and epithelial cell lines, which supports a non-specific membrane perturbation mechanism of action. In vivo, it induces pain by intraplantar injection into mice, suggesting a defensive function against vertebrate predators. This chain is M-poneritoxin-Nc1a, found in Neoponera commutata (Large hunting ant).